The primary structure comprises 338 residues: Glycerol-3-phosphate dehydrogenase [NAD(P)+] (338 aa).

3 residues coordinate NADPH: Ser-13, Trp-14, and Lys-108. Residues Lys-108, Gly-139, and Ser-141 each coordinate sn-glycerol 3-phosphate. An NADPH-binding site is contributed by Ala-143. Residues Lys-194, Asp-247, Ser-257, Arg-258, and Asn-259 each contribute to the sn-glycerol 3-phosphate site. Lys-194 functions as the Proton acceptor in the catalytic mechanism. An NADPH-binding site is contributed by Arg-258. NADPH contacts are provided by Val-282 and Glu-284.

Belongs to the NAD-dependent glycerol-3-phosphate dehydrogenase family.

The protein resides in the cytoplasm. The catalysed reaction is sn-glycerol 3-phosphate + NAD(+) = dihydroxyacetone phosphate + NADH + H(+). It carries out the reaction sn-glycerol 3-phosphate + NADP(+) = dihydroxyacetone phosphate + NADPH + H(+). Its pathway is membrane lipid metabolism; glycerophospholipid metabolism. In terms of biological role, catalyzes the reduction of the glycolytic intermediate dihydroxyacetone phosphate (DHAP) to sn-glycerol 3-phosphate (G3P), the key precursor for phospholipid synthesis. This chain is Glycerol-3-phosphate dehydrogenase [NAD(P)+], found in Streptococcus pneumoniae serotype 19F (strain G54).